The following is a 545-amino-acid chain: Zinc finger protein with KRAB and SCAN domains 4 (545 aa).

The segment at 1 to 22 (MAREPRKNAALDAQSAEDQTGL) is disordered. Residues Lys26 and Lys29 each participate in a glycyl lysine isopeptide (Lys-Gly) (interchain with G-Cter in SUMO2) cross-link. Positions 34-55 (ALTAEVRAPCSPARGPERSRQR) are disordered. In terms of domain architecture, SCAN box spans 53–135 (RQRFRGFRYP…VLLEYLERQL (83 aa)). Glycyl lysine isopeptide (Lys-Gly) (interchain with G-Cter in SUMO2) cross-links involve residues Lys178 and Lys222. The KRAB domain maps to 221–317 (LKMEDVALTL…QRKQKNAIGS (97 aa)). C2H2-type zinc fingers lie at residues 320–342 (HYCH…RRIH), 348–370 (YECE…QRVH), 376–398 (YECE…QRTH), 404–426 (YECD…HKIH), and 432–454 (YQCN…QRIH). A compositionally biased stretch (basic and acidic residues) spans 455–467 (GDKNVQNPEHGES). The segment at 455–480 (GDKNVQNPEHGESWESQGRTESQWEN) is disordered. Polar residues predominate over residues 468 to 480 (WESQGRTESQWEN). 2 consecutive C2H2-type zinc fingers follow at residues 487-509 (YKCN…QKIH) and 515-537 (YQCD…QRSH).

It belongs to the krueppel C2H2-type zinc-finger protein family. In terms of tissue distribution, expressed in adult heart, brain, placenta, lung and kidney, but not in adult liver and skeletal muscle. In 17-day old embryo, detected in liver, skeletal muscle, brain, heart and small intestine.

It is found in the nucleus. In terms of biological role, may be involved in the transcriptional activation of MDM2 and EP300 genes. This chain is Zinc finger protein with KRAB and SCAN domains 4 (ZKSCAN4), found in Homo sapiens (Human).